A 220-amino-acid chain; its full sequence is 14-3-3-like protein (220 aa).

It belongs to the 14-3-3 family.

This Spinacia oleracea (Spinach) protein is 14-3-3-like protein.